A 224-amino-acid chain; its full sequence is Germin-like protein 8-11 (224 aa).

Residues 1–22 (MASSSFLLLATLLAMASWQGMA) form the signal peptide. An intrachain disulfide couples cysteine 32 to cysteine 47. A Cupin type-1 domain is found at 62–212 (AMLDTPRKTN…AFQVEKGTID (151 aa)). Residue asparagine 76 is glycosylated (N-linked (GlcNAc...) asparagine). Residues histidine 109, histidine 111, glutamate 116, and histidine 157 each coordinate Mn(2+).

Belongs to the germin family. In terms of assembly, oligomer (believed to be a pentamer but probably hexamer).

The protein localises to the secreted. The protein resides in the extracellular space. It localises to the apoplast. Plays a role in broad-spectrum disease resistance. Probably has no oxalate oxidase activity even if the active site is conserved. In Oryza sativa subsp. japonica (Rice), this protein is Germin-like protein 8-11.